Here is a 270-residue protein sequence, read N- to C-terminus: Thymidylate synthase (270 aa).

Residues arginine 28 and 133 to 134 (RR) each bind dUMP. Cysteine 153 serves as the catalytic Nucleophile. Residues 173–176 (RSAD), asparagine 184, and 214–216 (HIY) each bind dUMP. Residue aspartate 176 coordinates (6R)-5,10-methylene-5,6,7,8-tetrahydrofolate. Alanine 269 lines the (6R)-5,10-methylene-5,6,7,8-tetrahydrofolate pocket.

The protein belongs to the thymidylate synthase family. Bacterial-type ThyA subfamily. Homodimer.

Its subcellular location is the cytoplasm. It carries out the reaction dUMP + (6R)-5,10-methylene-5,6,7,8-tetrahydrofolate = 7,8-dihydrofolate + dTMP. The protein operates within pyrimidine metabolism; dTTP biosynthesis. In terms of biological role, catalyzes the reductive methylation of 2'-deoxyuridine-5'-monophosphate (dUMP) to 2'-deoxythymidine-5'-monophosphate (dTMP) while utilizing 5,10-methylenetetrahydrofolate (mTHF) as the methyl donor and reductant in the reaction, yielding dihydrofolate (DHF) as a by-product. This enzymatic reaction provides an intracellular de novo source of dTMP, an essential precursor for DNA biosynthesis. The protein is Thymidylate synthase of Corynebacterium diphtheriae (strain ATCC 700971 / NCTC 13129 / Biotype gravis).